The chain runs to 437 residues: Chromosomal replication initiator protein DnaA (437 aa).

Positions 1–67 are domain I, interacts with DnaA modulators; the sequence is MKNKIIASLK…KVVKDILGKD (67 aa). Residues 67–97 form a domain II region; sequence DATYEITFKEIPYETKVESGPLIKKRPLLIT. A domain III, AAA+ region region spans residues 98 to 313; it reads PLNPKYTFEN…GAILRLIAYR (216 aa). The ATP site is built by Gly-141, Gly-143, Lys-144, and Thr-145. A domain IV, binds dsDNA region spans residues 314–437; that stretch reads NLYGTLNLSI…SKGFAQGESM (124 aa).

It belongs to the DnaA family. In terms of assembly, oligomerizes as a right-handed, spiral filament on DNA at oriC.

It localises to the cytoplasm. Plays an essential role in the initiation and regulation of chromosomal replication. ATP-DnaA binds to the origin of replication (oriC) to initiate formation of the DNA replication initiation complex once per cell cycle. Binds the DnaA box (a 9 base pair repeat at the origin) and separates the double-stranded (ds)DNA. Forms a right-handed helical filament on oriC DNA; dsDNA binds to the exterior of the filament while single-stranded (ss)DNA is stabiized in the filament's interior. The ATP-DnaA-oriC complex binds and stabilizes one strand of the AT-rich DNA unwinding element (DUE), permitting loading of DNA polymerase. After initiation quickly degrades to an ADP-DnaA complex that is not apt for DNA replication. Binds acidic phospholipids. The chain is Chromosomal replication initiator protein DnaA from Thermosipho melanesiensis (strain DSM 12029 / CIP 104789 / BI429).